The chain runs to 84 residues: Large ribosomal subunit protein bL27 (84 aa).

The interval 1–21 is disordered; that stretch reads MAHKKGGGSSKNGRDSQSKRL.

The protein belongs to the bacterial ribosomal protein bL27 family.

In Brachyspira hyodysenteriae (strain ATCC 49526 / WA1), this protein is Large ribosomal subunit protein bL27.